The sequence spans 824 residues: Acyl-homoserine lactone acylase QuiP (824 aa).

The signal sequence occupies residues 1 to 26; that stretch reads MASPALRHFLPRFGAAAAAASFLSLA. Residue Ser264 is the Nucleophile of the active site.

It belongs to the peptidase S45 family. Heterodimer of an alpha subunit and a beta subunit processed from the same precursor.

It localises to the periplasm. The catalysed reaction is an N-acyl-L-homoserine lactone + H2O = L-homoserine lactone + a carboxylate. In terms of biological role, catalyzes the deacylation of acyl-homoserine lactone (AHL or acyl-HSL), releasing homoserine lactone (HSL) and the corresponding fatty acid. Possesses a specificity for the degradation of long-chain acyl-HSLs (side chains of seven or more carbons in length). This is Acyl-homoserine lactone acylase QuiP (quiP) from Pseudomonas syringae pv. syringae (strain B728a).